The following is a 464-amino-acid chain: Putative dipeptidase CPC735_014430 (464 aa).

The segment at Met-1–Arg-34 is disordered. A helical transmembrane segment spans residues Gly-40–Ser-56. His-93, Asp-95, and Glu-206 together coordinate Zn(2+). Cysteines 145 and 235 form a disulfide. Residue His-233 participates in substrate binding. Residues His-277 and His-298 each contribute to the Zn(2+) site. 2 residues coordinate substrate: Arg-309 and Asp-369. N-linked (GlcNAc...) asparagine glycosylation occurs at Asn-382.

The protein belongs to the metallo-dependent hydrolases superfamily. Peptidase M19 family. The cofactor is Zn(2+).

It localises to the membrane. It carries out the reaction an L-aminoacyl-L-amino acid + H2O = 2 an L-alpha-amino acid. Its function is as follows. Hydrolyzes a wide range of dipeptides. This chain is Putative dipeptidase CPC735_014430, found in Coccidioides posadasii (strain C735) (Valley fever fungus).